The sequence spans 690 residues: uncharacterized protein (690 aa).

The tract at residues 553–601 (DESELLENEDKSESLENEDKSESLENEDKSESLENEDKSESLENEKKEK) is disordered. Basic and acidic residues predominate over residues 560–601 (NEDKSESLENEDKSESLENEDKSESLENEDKSESLENEKKEK).

The protein belongs to the glycosyltransferase 2 family.

This is an uncharacterized protein from Rickettsia bellii (strain RML369-C).